A 433-amino-acid polypeptide reads, in one-letter code: Probable carboxypeptidase ATEG_02905 (433 aa).

An N-terminal signal peptide occupies residues 1 to 18 (MKSAISLLLASAATYVGA). The disordered stretch occupies residues 20–40 (PHPEPPQLVLSPSTSTGVHGD). Residue Asn-92 is glycosylated (N-linked (GlcNAc...) asparagine). Residue Asp-161 coordinates Zn(2+). The active-site Proton acceptor is the Glu-193. Zn(2+) is bound at residue Glu-194.

Belongs to the peptidase M20A family. The cofactor is Zn(2+).

Its subcellular location is the secreted. In Aspergillus terreus (strain NIH 2624 / FGSC A1156), this protein is Probable carboxypeptidase ATEG_02905.